The following is a 550-amino-acid chain: Arginine--tRNA ligase (550 aa).

The 'HIGH' region signature appears at 130-140; that stretch reads ANPTGPIHLGG.

Belongs to the class-I aminoacyl-tRNA synthetase family. Monomer.

Its subcellular location is the cytoplasm. The catalysed reaction is tRNA(Arg) + L-arginine + ATP = L-arginyl-tRNA(Arg) + AMP + diphosphate. The protein is Arginine--tRNA ligase of Corynebacterium efficiens (strain DSM 44549 / YS-314 / AJ 12310 / JCM 11189 / NBRC 100395).